The primary structure comprises 258 residues: MLILISPAKTLDYQSPLTTTRYTLPELLDNAQQLIHEARKLTPPQISSLMRISDKLAGINAARFHDWQPNFTPENARQAILVFKGDVYTGLQAETFSEDDFDFAQQHLRMLSGLYGVLRPLDLMQPYRLEMGIRLENARGKDLYQFWGDIITNKLNEALAAQGDNVVINLASDEYFKSVKPKKLNAEIIKPVFLDEKNGKFKIISFYAKKARGLMSRFIIENRLTKPEQLTGFNSEGYFFDEASSSNGELVFKRYEQR.

Belongs to the UPF0246 family.

The chain is UPF0246 protein YaaA from Escherichia coli O45:K1 (strain S88 / ExPEC).